The following is a 105-amino-acid chain: Small ribosomal subunit protein uS10 (105 aa).

The protein belongs to the universal ribosomal protein uS10 family. As to quaternary structure, part of the 30S ribosomal subunit.

Its function is as follows. Involved in the binding of tRNA to the ribosomes. This Lachnoclostridium phytofermentans (strain ATCC 700394 / DSM 18823 / ISDg) (Clostridium phytofermentans) protein is Small ribosomal subunit protein uS10.